The sequence spans 158 residues: Transcriptional repressor NrdR (158 aa).

Residues Met-1–Asn-22 form a disordered region. A zinc finger spans residues Cys-3–Cys-34. Residues Thr-11–Asn-22 show a composition bias toward basic and acidic residues. Residues Leu-49–Asp-139 form the ATP-cone domain.

The protein belongs to the NrdR family. Requires Zn(2+) as cofactor.

Functionally, negatively regulates transcription of bacterial ribonucleotide reductase nrd genes and operons by binding to NrdR-boxes. In Rhizobium rhizogenes (strain K84 / ATCC BAA-868) (Agrobacterium radiobacter), this protein is Transcriptional repressor NrdR.